A 132-amino-acid chain; its full sequence is Small ribosomal subunit protein uS11c (132 aa).

Belongs to the universal ribosomal protein uS11 family. Part of the 30S ribosomal subunit.

The protein resides in the plastid. The protein localises to the chloroplast. This Cryptomeria japonica (Japanese cedar) protein is Small ribosomal subunit protein uS11c.